Consider the following 192-residue polypeptide: Flagellar transcriptional regulator FlhC (192 aa).

4 residues coordinate Zn(2+): C137, C140, C157, and C160.

It belongs to the FlhC family. In terms of assembly, heterohexamer composed of two FlhC and four FlhD subunits. Each FlhC binds a FlhD dimer, forming a heterotrimer, and a hexamer assembles by dimerization of two heterotrimers. Requires Zn(2+) as cofactor.

It is found in the cytoplasm. Functions in complex with FlhD as a master transcriptional regulator that regulates transcription of several flagellar and non-flagellar operons by binding to their promoter region. Activates expression of class 2 flagellar genes, including fliA, which is a flagellum-specific sigma factor that turns on the class 3 genes. Also regulates genes whose products function in a variety of physiological pathways. The chain is Flagellar transcriptional regulator FlhC from Escherichia coli O6:H1 (strain CFT073 / ATCC 700928 / UPEC).